The following is a 272-amino-acid chain: 2-C-methyl-D-erythritol 4-phosphate cytidylyltransferase (272 aa).

Belongs to the IspD/TarI cytidylyltransferase family. IspD subfamily.

The enzyme catalyses 2-C-methyl-D-erythritol 4-phosphate + CTP + H(+) = 4-CDP-2-C-methyl-D-erythritol + diphosphate. Its pathway is isoprenoid biosynthesis; isopentenyl diphosphate biosynthesis via DXP pathway; isopentenyl diphosphate from 1-deoxy-D-xylulose 5-phosphate: step 2/6. In terms of biological role, catalyzes the formation of 4-diphosphocytidyl-2-C-methyl-D-erythritol from CTP and 2-C-methyl-D-erythritol 4-phosphate (MEP). The polypeptide is 2-C-methyl-D-erythritol 4-phosphate cytidylyltransferase (Xanthomonas oryzae pv. oryzae (strain MAFF 311018)).